We begin with the raw amino-acid sequence, 364 residues long: Phosphoserine aminotransferase (364 aa).

R46 serves as a coordination point for L-glutamate. Residues 80–81 (AR), W106, T157, D176, and Q199 contribute to the pyridoxal 5'-phosphate site. An N6-(pyridoxal phosphate)lysine modification is found at K200. 241–242 (NT) provides a ligand contact to pyridoxal 5'-phosphate.

The protein belongs to the class-V pyridoxal-phosphate-dependent aminotransferase family. SerC subfamily. As to quaternary structure, homodimer. It depends on pyridoxal 5'-phosphate as a cofactor.

The protein resides in the cytoplasm. The catalysed reaction is O-phospho-L-serine + 2-oxoglutarate = 3-phosphooxypyruvate + L-glutamate. It catalyses the reaction 4-(phosphooxy)-L-threonine + 2-oxoglutarate = (R)-3-hydroxy-2-oxo-4-phosphooxybutanoate + L-glutamate. The protein operates within amino-acid biosynthesis; L-serine biosynthesis; L-serine from 3-phospho-D-glycerate: step 2/3. It functions in the pathway cofactor biosynthesis; pyridoxine 5'-phosphate biosynthesis; pyridoxine 5'-phosphate from D-erythrose 4-phosphate: step 3/5. In terms of biological role, catalyzes the reversible conversion of 3-phosphohydroxypyruvate to phosphoserine and of 3-hydroxy-2-oxo-4-phosphonooxybutanoate to phosphohydroxythreonine. The polypeptide is Phosphoserine aminotransferase (Vibrio vulnificus (strain CMCP6)).